A 484-amino-acid chain; its full sequence is NADH-quinone oxidoreductase subunit N (484 aa).

14 helical membrane passes run 11 to 31 (SLWIALPEIFLLSAIVIVLLI), 42 to 62 (VTYYLIQLSLFITGLLAFNLI), 79 to 98 (MASVFKVFMMAATMVAMVYS), 113 to 133 (FVLVLLSVLGMMVMVSGYSLL), 134 to 154 (TLYLGLEILSLSLYALIAIAR), 167 to 187 (FVLGAIASGLLLYGMSMIYGI), 211 to 231 (LIINFGLVFLVIGIAFKLGAV), 248 to 268 (VTLFISTVPKIAAFAMLVRIL), 279 to 299 (WSDLFMVLSILSIALGSVVAL), 313 to 333 (ISHVGFIMLGFVAGTPIGYGA), 335 to 355 (AFYMLVYVLMSLAAFGMIILL), 378 to 398 (FALMMLIIILSMAGVPPLVGF), 408 to 428 (VVSAGFITIAVIVVIFAVISA), and 457 to 477 (LVLSINAILILAVGLFPDFWM).

Belongs to the complex I subunit 2 family. In terms of assembly, NDH-1 is composed of 14 different subunits. Subunits NuoA, H, J, K, L, M, N constitute the membrane sector of the complex.

It localises to the cell inner membrane. It carries out the reaction a quinone + NADH + 5 H(+)(in) = a quinol + NAD(+) + 4 H(+)(out). NDH-1 shuttles electrons from NADH, via FMN and iron-sulfur (Fe-S) centers, to quinones in the respiratory chain. The immediate electron acceptor for the enzyme in this species is believed to be ubiquinone. Couples the redox reaction to proton translocation (for every two electrons transferred, four hydrogen ions are translocated across the cytoplasmic membrane), and thus conserves the redox energy in a proton gradient. This Ruthia magnifica subsp. Calyptogena magnifica protein is NADH-quinone oxidoreductase subunit N.